We begin with the raw amino-acid sequence, 443 residues long: Thymidine phosphorylase (443 aa).

The protein belongs to the thymidine/pyrimidine-nucleoside phosphorylase family. As to quaternary structure, homodimer.

The enzyme catalyses thymidine + phosphate = 2-deoxy-alpha-D-ribose 1-phosphate + thymine. It functions in the pathway pyrimidine metabolism; dTMP biosynthesis via salvage pathway; dTMP from thymine: step 1/2. In terms of biological role, the enzymes which catalyze the reversible phosphorolysis of pyrimidine nucleosides are involved in the degradation of these compounds and in their utilization as carbon and energy sources, or in the rescue of pyrimidine bases for nucleotide synthesis. The protein is Thymidine phosphorylase of Shewanella woodyi (strain ATCC 51908 / MS32).